Reading from the N-terminus, the 206-residue chain is Guanylate kinase (206 aa).

Residues 6–184 (GTLYIISAPS…ALDDLKAIFR (179 aa)) form the Guanylate kinase-like domain. 13–20 (APSGAGKS) serves as a coordination point for ATP.

It belongs to the guanylate kinase family.

The protein localises to the cytoplasm. It catalyses the reaction GMP + ATP = GDP + ADP. Functionally, essential for recycling GMP and indirectly, cGMP. This Pseudomonas fluorescens (strain Pf0-1) protein is Guanylate kinase.